The following is a 93-amino-acid chain: Antitoxin RelF (93 aa).

It belongs to the phD/YefM antitoxin family. In terms of assembly, interacts with toxin RelG, which neutralizes the toxin. Also interacts with toxins RelE and RelK in vitro, in M.smegmatis coexpression with non-cognate toxins increases the toxicity of RelE but not of RelK.

Its function is as follows. Antitoxin component of a type II toxin-antitoxin (TA) system. Upon expression in M.smegmatis neutralizes the effect of toxin RelE2. In terms of biological role, induces its own promoter, in combination with RelG represses its own promoter. Has been seen to bind DNA in complex with toxin RelG but not alone. This is Antitoxin RelF (relF) from Mycobacterium tuberculosis (strain ATCC 25618 / H37Rv).